Reading from the N-terminus, the 208-residue chain is uncharacterized protein (208 aa).

Residues 118-134 (QYPNQYQQQPQQQQPGY) are compositionally biased toward low complexity. The tract at residues 118 to 208 (QYPNQYQQQP…HKKEKNEIKE (91 aa)) is disordered. Polar residues predominate over residues 138-175 (NYNQPPVQLNKQAYDNYQQNDYKSNNQPNLAKENNISN). A compositionally biased stretch (basic residues) spans 187 to 201 (KKEKKHSFFSKLHKK).

This is an uncharacterized protein from Dictyostelium discoideum (Social amoeba).